Reading from the N-terminus, the 874-residue chain is DNA mismatch repair protein MutS (874 aa).

Positions 1 to 12 are enriched in basic and acidic residues; the sequence is MSNDRPLTHSEA. The interval 1 to 20 is disordered; that stretch reads MSNDRPLTHSEAESSALRLG. 661-668 serves as a coordination point for ATP; the sequence is GPNASGKS. The disordered stretch occupies residues 854-874; that stretch reads RKSSMGDPPTAPEINQGELPF.

The protein belongs to the DNA mismatch repair MutS family.

Functionally, this protein is involved in the repair of mismatches in DNA. It is possible that it carries out the mismatch recognition step. This protein has a weak ATPase activity. This Thermosynechococcus vestitus (strain NIES-2133 / IAM M-273 / BP-1) protein is DNA mismatch repair protein MutS.